The sequence spans 524 residues: Cytochrome P450 52A6 (524 aa).

The helical transmembrane segment at 17-34 (WYTVITLAALVFLISSNI) threads the bilayer. Residue Cys-472 coordinates heme.

It belongs to the cytochrome P450 family. It depends on heme as a cofactor.

The protein resides in the membrane. Its function is as follows. Together with an NADPH cytochrome P450 the enzyme system catalyzes the terminal hydroxylation as the first step in the assimilation of alkanes and fatty acids. Preferentially hydroxylates hexadecane. The polypeptide is Cytochrome P450 52A6 (CYP52A6) (Candida tropicalis (Yeast)).